A 225-amino-acid chain; its full sequence is Small ribosomal subunit protein uS3 (225 aa).

A KH type-2 domain is found at 38–106 (IRKFIQSRFS…PVNLNIIEVK (69 aa)).

It belongs to the universal ribosomal protein uS3 family. As to quaternary structure, part of the 30S ribosomal subunit. Forms a tight complex with proteins S10 and S14.

Its function is as follows. Binds the lower part of the 30S subunit head. Binds mRNA in the 70S ribosome, positioning it for translation. The sequence is that of Small ribosomal subunit protein uS3 from Leptospira borgpetersenii serovar Hardjo-bovis (strain JB197).